The chain runs to 328 residues: Ferredoxin--NADP reductase (328 aa).

The FAD site is built by Glu34, Gln42, Tyr47, Val87, Phe120, Asp283, and Thr323.

It belongs to the ferredoxin--NADP reductase type 2 family. Homodimer. The cofactor is FAD.

The enzyme catalyses 2 reduced [2Fe-2S]-[ferredoxin] + NADP(+) + H(+) = 2 oxidized [2Fe-2S]-[ferredoxin] + NADPH. In Pediococcus pentosaceus (strain ATCC 25745 / CCUG 21536 / LMG 10740 / 183-1w), this protein is Ferredoxin--NADP reductase.